The primary structure comprises 366 residues: MKKILLTCLLASASFQVSSHTSEVLSGYWAYQEFLEKFPQQGVLTRELSEVVRNAPVPLKSHQSKPIRISVVFPGQQISDYWVRNLSAFEKRMDKLQISYQINQVFTRPNADVKQQSVSLMEALKSKSDYLIFTLDTTRHRKFIEHVLDSSETKLILQNITTPVQAWDKRQPFLYVGFDHAEGSIALADKFKQLYPQGANYSVLYFSEGYVSDARGDTFIHQMNHSDRFALKSSFYTKATKASGYESAKNSLERYPDVDFIYACSTDVALGAIDALKELGRTNIKINGWGGGSAELDAIAVGDLDLTVMRMNDDTGIAMAEAIKWDIEGRTVPTVFSGDFEVVTKEDSPEHIELLKKRAFRYSDQP.

An N-terminal signal peptide occupies residues 1–13; the sequence is MKKILLTCLLASA.

The protein belongs to the bacterial solute-binding protein 2 family.

Its subcellular location is the periplasm. Its function is as follows. Binds to an autoinducer molecule. This complex then interacts with the LuxQ sensor protein. This is Autoinducer 2-binding periplasmic protein LuxP (luxP) from Vibrio vulnificus (strain YJ016).